Here is a 559-residue protein sequence, read N- to C-terminus: Glycerol kinase (559 aa).

Thr20 is an ADP binding site. Residues Thr20, Ser21, and Ser22 each coordinate ATP. Position 20 (Thr20) interacts with sn-glycerol 3-phosphate. Arg24 provides a ligand contact to ADP. Positions 94, 95, and 148 each coordinate sn-glycerol 3-phosphate. Glycerol-binding residues include Arg94, Glu95, and Tyr148. Gly252 is a beta-D-fructose 1,6-bisphosphate binding site. Residue Asp265 participates in sn-glycerol 3-phosphate binding. 2 residues coordinate glycerol: Asp265 and Gln266. ADP contacts are provided by Thr287, Gly332, Gly433, and Asn437. Positions 287, 332, and 433 each coordinate ATP. Residue Glu501 coordinates Zn(2+). The chain crosses the membrane as a helical span at residues 532-552 (IFCSLPLGFFIVSSMVMLIGA).

The protein belongs to the FGGY kinase family.

It localises to the mitochondrion outer membrane. The protein resides in the nucleus. It is found in the cytoplasm. The protein localises to the cytosol. It carries out the reaction glycerol + ATP = sn-glycerol 3-phosphate + ADP + H(+). It functions in the pathway polyol metabolism; glycerol degradation via glycerol kinase pathway; sn-glycerol 3-phosphate from glycerol: step 1/1. In terms of biological role, kinase that plays a key role in glycerol metabolism, catalyzing its phosphorylation to produce sn-glycerol 3-phosphate. Sn-glycerol 3-phosphate is a crucial intermediate in various metabolic pathways, such as the synthesis of glycerolipids and triglycerides, glycogenesis, glycolysis and gluconeogenesis. The protein is Glycerol kinase of Rattus norvegicus (Rat).